Here is a 146-residue protein sequence, read N- to C-terminus: Hemoglobin subunit beta (146 aa).

N-acetylvaline is present on valine 1. The 145-residue stretch at 2 to 146 (HLTGEEKSAV…VANALAHKYH (145 aa)) folds into the Globin domain. A Phosphothreonine modification is found at threonine 12. Serine 44 carries the post-translational modification Phosphoserine. Lysine 59 bears the N6-acetyllysine mark. Histidine 63 serves as a coordination point for heme b. An N6-acetyllysine modification is found at lysine 82. Histidine 92 contributes to the heme b binding site. Position 93 is an S-nitrosocysteine (cysteine 93). Lysine 144 bears the N6-acetyllysine mark.

This sequence belongs to the globin family. Heterotetramer of two alpha chains and two beta chains. In terms of tissue distribution, red blood cells.

Involved in oxygen transport from the lung to the various peripheral tissues. This chain is Hemoglobin subunit beta (HBB), found in Phoca vitulina (Harbor seal).